The following is a 268-amino-acid chain: Phosphatidylcholine synthase (268 aa).

At 1–27 (MAARKAAKKLTDRIPRPKKKVTWPQAR) the chain is on the cytoplasmic side. The chain crosses the membrane as a helical span at residues 28–48 (AFSVHLLTASGSFLAFLSLVA). The Periplasmic segment spans residues 49–53 (ASEER). A helical membrane pass occupies residues 54–74 (WTAMFWWLGLALFVDGIDGPI). Over 75 to 88 (ARKLEVKEILPTWS) the chain is Cytoplasmic. The helical transmembrane segment at 89 to 109 (GELLDNIIDYVTYVLIPAFAL) threads the bilayer. Residues 110 to 112 (YQR) are Periplasmic-facing. The helical transmembrane segment at 113–133 (GFMGEGLSFLSAAIIVVSSAI) threads the bilayer. The Cytoplasmic portion of the chain corresponds to 134–145 (YYADTGMKTKEN). Residues 146 to 166 (FFKGFPVVWNMVVFTLFVIEP) form a helical membrane-spanning segment. Topologically, residues 167–168 (GQ) are periplasmic. A helical transmembrane segment spans residues 169–189 (WVSFAVVVVAGILTFVPINFI). The Cytoplasmic portion of the chain corresponds to 190–203 (HPVRVVRLRPFNLT). The helical transmembrane segment at 204-224 (MTLLWCAFGALALAQAALAAF) threads the bilayer. The Periplasmic portion of the chain corresponds to 225–240 (YDQIGVLGAQVSTFIK). The helical transmembrane segment at 241 to 261 (IGITITGLYLACIGGIMQFFP) threads the bilayer. Over 262–268 (NLGAKKA) the chain is Cytoplasmic.

Belongs to the CDP-alcohol phosphatidyltransferase class-I family. Mn(2+) is required as a cofactor.

It is found in the cell inner membrane. It catalyses the reaction a CDP-1,2-diacyl-sn-glycerol + choline = a 1,2-diacyl-sn-glycero-3-phosphocholine + CMP + H(+). In terms of biological role, condenses choline with CDP-diglyceride to produce phosphatidylcholine and CMP. The polypeptide is Phosphatidylcholine synthase (pcs) (Mesorhizobium japonicum (strain LMG 29417 / CECT 9101 / MAFF 303099) (Mesorhizobium loti (strain MAFF 303099))).